Consider the following 149-residue polypeptide: UPF0260 protein PSPTO_3918 (149 aa).

This sequence belongs to the UPF0260 family.

This chain is UPF0260 protein PSPTO_3918, found in Pseudomonas syringae pv. tomato (strain ATCC BAA-871 / DC3000).